The primary structure comprises 472 residues: Serine incorporator 3 (472 aa).

Topologically, residues 1-95 (MGAVLGVFSL…KECDVLVRYK (95 aa)) are extracellular. Asn-34 carries N-linked (GlcNAc...) asparagine glycosylation. A helical transmembrane segment spans residues 96–116 (AVYRISFALAVFFFAFSLLML). The Cytoplasmic segment spans residues 117–131 (NVKTSKDPRAAIHNG). Residues 132–152 (FWFFKIAAIVGVMVGSFYIPG) form a helical membrane-spanning segment. The Extracellular portion of the chain corresponds to 153–158 (GHFNTA). Residues 159–179 (WFVIGMVGAAFFILIQLVLLV) form a helical membrane-spanning segment. Over 180–202 (DFAHSWNESWVNRMEEGNPKCWY) the chain is Cytoplasmic. Residues 203 to 223 (AALLSVTSLFYILSIIFAGLL) traverse the membrane as a helical segment. Residues 224 to 238 (YTYYTKPDGCTENKF) lie on the Extracellular side of the membrane. Residues 239–259 (FISFNLILCVVISVLSIHPKI) form a helical membrane-spanning segment. Residues 260-328 (QEHQPRSGLL…APTPAVPLQS (69 aa)) are Cytoplasmic-facing. The chain crosses the membrane as a helical span at residues 329 to 349 (GPSLNKENFIGLLVFVLSLSY). Topologically, residues 350-405 (SSIRNSSNSQVSKLTLSGSDSVILRDTAANGASDEEDGRPRRAVDNEREGVQYNYS) are extracellular. A glycan (N-linked (GlcNAc...) asparagine) is linked at Asn-354. Position 370 is a phosphoserine (Ser-370). Asn-403 is a glycosylation site (N-linked (GlcNAc...) asparagine). The helical transmembrane segment at 406–426 (MFHLMLCSASLYIMMTLTNWY) threads the bilayer. The Cytoplasmic segment spans residues 427-445 (SPDANFQSMTSKWPAVWVK). The chain crosses the membrane as a helical span at residues 446–466 (ISSSWVCLLLYVWTLVAPLVL). At 467–472 (TNRDFS) the chain is on the extracellular side.

Belongs to the TDE1 family. Post-translationally, N-glycosylated.

Its subcellular location is the cell membrane. The protein resides in the golgi apparatus membrane. The enzyme catalyses a 1,2-diacyl-sn-glycero-3-phospho-L-serine(in) = a 1,2-diacyl-sn-glycero-3-phospho-L-serine(out). It carries out the reaction a 1,2-diacyl-sn-glycero-3-phosphocholine(in) = a 1,2-diacyl-sn-glycero-3-phosphocholine(out). It catalyses the reaction a 1,2-diacyl-sn-glycero-3-phosphoethanolamine(in) = a 1,2-diacyl-sn-glycero-3-phosphoethanolamine(out). Restriction factor required to restrict infectivity of gammaretroviruses: acts by inhibiting an early step of viral infection. Impairs the penetration of the viral particle into the cytoplasm. Non-ATP-dependent, non-specific lipid transporter for phosphatidylserine, phosphatidylcholine, and phosphatidylethanolamine. Functions as a scramblase that flips lipids in both directions across the membrane. Phospholipid scrambling results in gammaretroviral surface exposure of phosphatidylserine and loss of membrane asymmetry, which leads to loss of infectivity. The chain is Serine incorporator 3 (SERINC3) from Bos taurus (Bovine).